The following is a 229-amino-acid chain: Clathrin light chain B (229 aa).

Low complexity predominate over residues 1–17 (MADDFGFFSSSESGAPE). A disordered region spans residues 1–82 (MADDFGFFSS…NGDVFQEANG (82 aa)). A phosphoserine mark is found at S11 and S13. Polar residues predominate over residues 58–73 (GPTSGAGSEDMGTTVN). Residues 93–155 (ADRLTQEPES…QVEKNKINNR (63 aa)) form an involved in binding clathrin heavy chain region. Position 187 is a phosphothreonine (T187). Cysteines 199 and 209 form a disulfide. The residue at position 204 (K204) is an N6-acetyllysine. S217 is subject to Phosphoserine.

It belongs to the clathrin light chain family. Clathrin coats are formed from molecules containing 3 heavy chains and 3 light chains. Interacts (via N-terminus) with HIP1. Interacts with HIP1R.

Its subcellular location is the cytoplasmic vesicle membrane. It is found in the membrane. The protein localises to the coated pit. In terms of biological role, clathrin is the major protein of the polyhedral coat of coated pits and vesicles. The sequence is that of Clathrin light chain B (CLTB) from Homo sapiens (Human).